The sequence spans 347 residues: NADH-ubiquinone oxidoreductase chain 2 (347 aa).

A run of 10 helical transmembrane segments spans residues 3 to 23 (PPIL…VMLS), 25 to 45 (HWLL…PILM), 66 to 86 (ASML…QWMI), 111 to 131 (FHFW…MILL), 149 to 169 (INTD…GWGG), 178 to 198 (IMAY…IYNP), 201 to 221 (MFLN…LFML), 237 to 257 (IPLI…LPPL), 274 to 294 (DMIV…YFYM), and 325 to 345 (LLPP…MMSI).

It belongs to the complex I subunit 2 family. Core subunit of respiratory chain NADH dehydrogenase (Complex I) which is composed of 45 different subunits. Interacts with TMEM242.

The protein resides in the mitochondrion inner membrane. The catalysed reaction is a ubiquinone + NADH + 5 H(+)(in) = a ubiquinol + NAD(+) + 4 H(+)(out). Its function is as follows. Core subunit of the mitochondrial membrane respiratory chain NADH dehydrogenase (Complex I) which catalyzes electron transfer from NADH through the respiratory chain, using ubiquinone as an electron acceptor. Essential for the catalytic activity and assembly of complex I. In Vulpes vulpes (Red fox), this protein is NADH-ubiquinone oxidoreductase chain 2.